A 419-amino-acid polypeptide reads, in one-letter code: Transcription termination factor Rho (419 aa).

One can recognise a Rho RNA-BD domain in the interval 48–123 (DIFGDGVLEI…LKVNEVNYDK (76 aa)). RNA-binding stretches follow at residues 61-66 (GFGFLR), 78-80 (DIY), and 108-110 (ERY). ATP is bound by residues 169-174 (GRGQRG), 181-186 (KAGKTI), and Arg212. The tract at residues 284–288 (VLTGG) is RNA-binding 2.

Belongs to the Rho family. In terms of assembly, homohexamer. The homohexamer assembles into an open ring structure.

Its function is as follows. Facilitates transcription termination by a mechanism that involves Rho binding to the nascent RNA, activation of Rho's RNA-dependent ATPase activity, and release of the mRNA from the DNA template. This chain is Transcription termination factor Rho, found in Buchnera aphidicola subsp. Acyrthosiphon pisum (strain APS) (Acyrthosiphon pisum symbiotic bacterium).